Reading from the N-terminus, the 149-residue chain is Transcriptional repressor NrdR (149 aa).

Residues Cys3–Cys34 fold into a zinc finger. The ATP-cone domain maps to Pro49–Glu139.

The protein belongs to the NrdR family. Requires Zn(2+) as cofactor.

Functionally, negatively regulates transcription of bacterial ribonucleotide reductase nrd genes and operons by binding to NrdR-boxes. This Shewanella piezotolerans (strain WP3 / JCM 13877) protein is Transcriptional repressor NrdR.